We begin with the raw amino-acid sequence, 140 residues long: Transcriptional regulator YdaT (140 aa).

Functionally, transcriptional regulator that causes a severe detrimental growth effect and reduces cell viability. When expressed, it alters expression of a variety of bacterial regulons normally controlled by the transcriptional regulatory protein RcsA, resulting in deficient lipopolysaccharide biosynthesis and cell division. YdaT has no effect on Rac prophage excision. Overexpression of ydaST reduces growth and leads to loss of cell viability. May contribute to toxicity and morphological defects. The protein is Transcriptional regulator YdaT (ydaT) of Escherichia coli (strain K12).